Consider the following 152-residue polypeptide: Succinate dehydrogenase [ubiquinone] cytochrome b small subunit, mitochondrial (152 aa).

A mitochondrion-targeting transit peptide spans Met1–Ser21. The Mitochondrial matrix segment spans residues Leu22–Ser56. The chain crosses the membrane as a helical span at residues Met57–Leu78. The Mitochondrial intermembrane segment spans residues Tyr79–Ala83. The chain crosses the membrane as a helical span at residues Met84–Val104. Position 95 (His95) interacts with heme b. The Mitochondrial matrix segment spans residues Thr105–Lys113. Tyr107 serves as a coordination point for a ubiquinone. Residues Ile114–Phe135 form a helical membrane-spanning segment. Over Asn136–Leu152 the chain is Mitochondrial intermembrane.

It belongs to the CybS family. In terms of assembly, component of complex II composed of four subunits: the flavoprotein (FP) SDHA, iron-sulfur protein (IP) SDHB, and a cytochrome b560 composed of SDHC and SDHD.

The protein localises to the mitochondrion inner membrane. The protein operates within carbohydrate metabolism; tricarboxylic acid cycle. In terms of biological role, membrane-anchoring subunit of succinate dehydrogenase (SDH) that is involved in complex II of the mitochondrial electron transport chain and is responsible for transferring electrons from succinate to ubiquinone (coenzyme Q). SDH also oxidizes malate to the non-canonical enol form of oxaloacetate, enol-oxaloacetate. Enol-oxaloacetate, which is a potent inhibitor of the succinate dehydrogenase activity, is further isomerized into keto-oxaloacetate. The polypeptide is Succinate dehydrogenase [ubiquinone] cytochrome b small subunit, mitochondrial (sdhd) (Xenopus tropicalis (Western clawed frog)).